The sequence spans 480 residues: tRNA modification GTPase MnmE (480 aa).

(6S)-5-formyl-5,6,7,8-tetrahydrofolate contacts are provided by R20, E114, and K154. The region spanning 250–406 (GLKLAIIGPP…ILKNIENIAE (157 aa)) is the TrmE-type G domain. Residue N260 coordinates K(+). Residues 260–265 (NVGKSS), 279–285 (SNIAGTT), and 304–307 (DTAG) contribute to the GTP site. S264 is a Mg(2+) binding site. S279, I281, and T284 together coordinate K(+). Residue T285 participates in Mg(2+) binding. K480 contributes to the (6S)-5-formyl-5,6,7,8-tetrahydrofolate binding site.

This sequence belongs to the TRAFAC class TrmE-Era-EngA-EngB-Septin-like GTPase superfamily. TrmE GTPase family. In terms of assembly, homodimer. Heterotetramer of two MnmE and two MnmG subunits. The cofactor is K(+).

Its subcellular location is the cytoplasm. Its function is as follows. Exhibits a very high intrinsic GTPase hydrolysis rate. Involved in the addition of a carboxymethylaminomethyl (cmnm) group at the wobble position (U34) of certain tRNAs, forming tRNA-cmnm(5)s(2)U34. The sequence is that of tRNA modification GTPase MnmE from Rickettsia felis (strain ATCC VR-1525 / URRWXCal2) (Rickettsia azadi).